A 275-amino-acid polypeptide reads, in one-letter code: uncharacterized protein (275 aa).

NAD(+) contacts are provided by residues 20-22, 41-42, 80-81, and Asn107; these read RAQ and DI. A substrate-binding site is contributed by Ser160. Residue Tyr173 is the Proton acceptor of the active site. Residues Lys177 and 206-208 contribute to the NAD(+) site; that span reads VDT.

The protein belongs to the short-chain dehydrogenases/reductases (SDR) family.

This is an uncharacterized protein from Mycobacterium tuberculosis (strain CDC 1551 / Oshkosh).